Reading from the N-terminus, the 314-residue chain is Olfactory receptor 6C6 (314 aa).

Topologically, residues 1–24 (MKNKSMEIEFILLGLTDDPQLQIV) are extracellular. An N-linked (GlcNAc...) asparagine glycan is attached at Asn-3. A helical transmembrane segment spans residues 25-45 (IFLFLFLNYTLSLMGNLIIII). Residues 46 to 63 (LTLLDPRLKTPMYFFLRN) lie on the Cytoplasmic side of the membrane. The helical transmembrane segment at 64–84 (FSFLEVIFTTVCIPRFLITIV) threads the bilayer. Topologically, residues 85–95 (TRDKTISYNNC) are extracellular. Cysteines 95 and 177 form a disulfide. The helical transmembrane segment at 96–116 (ATQLFFILLPGVTEFYLLAAM) threads the bilayer. Over 117–141 (SYDRYVAICKPLHYPIIMSSKVCYQ) the chain is Cytoplasmic. Residues 142 to 162 (LVLSSWVTGFLIIFPPLVMGL) form a helical membrane-spanning segment. Residues 163–199 (KLDFCASKTIDHFMCETSPILQISCTDTHVLELMSFT) lie on the Extracellular side of the membrane. Residues 200–220 (LAVVTLVVTLVLVILSYTCII) form a helical membrane-spanning segment. The Cytoplasmic portion of the chain corresponds to 221–237 (KTILKFSSAQQRNKAFS). Residues 238 to 258 (TCTSHMIVVSMTYGSCIFMYI) form a helical membrane-spanning segment. Over 259–269 (KPSAKERVTVS) the chain is Extracellular. The helical transmembrane segment at 270 to 290 (KGVALLYTSIAPLLNPFIYTL) threads the bilayer. Residues 291–314 (RNQQVKEVFWDVLQKNLCFSKRPF) are Cytoplasmic-facing.

Belongs to the G-protein coupled receptor 1 family.

It localises to the cell membrane. In terms of biological role, odorant receptor. The polypeptide is Olfactory receptor 6C6 (OR6C6) (Homo sapiens (Human)).